An 890-amino-acid polypeptide reads, in one-letter code: Translation initiation factor IF-2 (890 aa).

Residues 45 to 304 (LIDHLNQKNS…LQQGFQKPAQ (260 aa)) form a disordered region. A compositionally biased stretch (polar residues) spans 67–81 (STLNIPGTGGKSKSV). Over residues 92–217 (VKRDPQEAER…RMAEENKWID (126 aa)) the composition is skewed to basic and acidic residues. Positions 252–266 (GRGRNAKAARPKKGN) are enriched in basic residues. A compositionally biased stretch (basic and acidic residues) spans 267–280 (KHAESKADREEARA). In terms of domain architecture, tr-type G spans 389-558 (PRAPVVTIMG…LLQAEVLELK (170 aa)). The segment at 398 to 405 (GHVDHGKT) is G1. 398–405 (GHVDHGKT) serves as a coordination point for GTP. Positions 423 to 427 (GITQH) are G2. The tract at residues 444-447 (DTPG) is G3. Residues 444–448 (DTPGH) and 498–501 (NKID) contribute to the GTP site. The G4 stretch occupies residues 498–501 (NKID). The segment at 534 to 536 (SAK) is G5. Lysine 808 bears the N6-acetyllysine mark.

It belongs to the TRAFAC class translation factor GTPase superfamily. Classic translation factor GTPase family. IF-2 subfamily.

The protein resides in the cytoplasm. One of the essential components for the initiation of protein synthesis. Protects formylmethionyl-tRNA from spontaneous hydrolysis and promotes its binding to the 30S ribosomal subunits. Also involved in the hydrolysis of GTP during the formation of the 70S ribosomal complex. This chain is Translation initiation factor IF-2, found in Escherichia coli O81 (strain ED1a).